Here is an 833-residue protein sequence, read N- to C-terminus: Protein PAT1 homolog 1 (833 aa).

Disordered regions lie at residues 279–313, 398–427, and 492–549; these read DMRE…MHGM, NIRQ…SGMP, and EEAT…DKKL. A compositionally biased stretch (low complexity) spans 303-313; the sequence is PSLSPGGMHGM. Polar residues predominate over residues 398 to 408; the sequence is NIRQNGPQFSH.

Belongs to the PAT1 family.

The protein localises to the cytoplasm. It localises to the P-body. Functionally, RNA-binding protein involved in deadenylation-dependent decapping of mRNAs, leading to the degradation of mRNAs. Acts as a scaffold protein that connects deadenylation and decapping machinery. Required for the recruitment of P-body components such as cgh-1 in somatic blastomeres. May play a role in recruiting the decapping enzyme dcap-1 to cytoplasmic puncta in the cell body of the posterior touch receptor neuron, PLM. This is Protein PAT1 homolog 1 from Caenorhabditis elegans.